A 458-amino-acid chain; its full sequence is Bone morphogenetic protein 3 (458 aa).

Positions 1–23 (MAECRPWLVLWVGCCGCLCLALG) are cleaved as a signal peptide. Residues 24 to 348 (ELLNDGLLAV…EQTLKKARRK (325 aa)) constitute a propeptide that is removed on maturation. An N-linked (GlcNAc...) asparagine glycan is attached at Asn107. Disordered regions lie at residues 244 to 275 (DSVV…KKRS) and 303 to 335 (ERKP…SQTL). Positions 320–329 (NKKKLRKGSR) are enriched in basic residues. Intrachain disulfides connect Cys356–Cys423, Cys385–Cys455, and Cys389–Cys457. Asn449 is a glycosylation site (N-linked (GlcNAc...) asparagine).

It belongs to the TGF-beta family. In terms of assembly, homodimer. Can form heterodimers with ADMP, BMP-2-I and/or BMP-2-II, and DERRIERE.

The protein resides in the secreted. In terms of biological role, dorsalizing factor. Antagonizes mesoderm formation by ventralizing BMPs. This Xenopus laevis (African clawed frog) protein is Bone morphogenetic protein 3 (bmp3).